Here is a 596-residue protein sequence, read N- to C-terminus: Aspartate--tRNA(Asp/Asn) ligase (596 aa).

Glu-175 serves as a coordination point for L-aspartate. The tract at residues 199 to 202 (QQYK) is aspartate. L-aspartate-binding residues include Arg-221 and His-454. An ATP-binding site is contributed by 221-223 (RDE). Residue Glu-488 participates in ATP binding. Residue Arg-495 participates in L-aspartate binding. 540-543 (GIDR) serves as a coordination point for ATP.

This sequence belongs to the class-II aminoacyl-tRNA synthetase family. Type 1 subfamily. In terms of assembly, homodimer.

It is found in the cytoplasm. It carries out the reaction tRNA(Asx) + L-aspartate + ATP = L-aspartyl-tRNA(Asx) + AMP + diphosphate. Its function is as follows. Aspartyl-tRNA synthetase with relaxed tRNA specificity since it is able to aspartylate not only its cognate tRNA(Asp) but also tRNA(Asn). Reaction proceeds in two steps: L-aspartate is first activated by ATP to form Asp-AMP and then transferred to the acceptor end of tRNA(Asp/Asn). The protein is Aspartate--tRNA(Asp/Asn) ligase of Rhizobium leguminosarum bv. trifolii (strain WSM2304).